The primary structure comprises 410 residues: Riboflavin biosynthesis protein RibBA (410 aa).

Residues 1-205 are DHBP synthase; sequence MENKRIDTIE…IKDLVAFQMR (205 aa). D-ribulose 5-phosphate contacts are provided by residues 30 to 31, Asp-35, 144 to 148, and Glu-168; these read RE and RVGHT. Residue Glu-31 coordinates Mg(2+). His-147 lines the Mg(2+) pocket. The GTP cyclohydrolase II stretch occupies residues 206–410; it reads RSKLVQRAVE…ISCSCGSGNH (205 aa). GTP is bound at residue 256-260; the sequence is RVHSQ. Zn(2+)-binding residues include Cys-261, Cys-272, and Cys-274. Residues Gln-277, 299-301, and Thr-321 contribute to the GTP site; that span reads EGR. Catalysis depends on Asp-333, which acts as the Proton acceptor; for GTP cyclohydrolase activity. Residue Arg-335 is the Nucleophile; for GTP cyclohydrolase activity of the active site. GTP is bound by residues Thr-356 and Lys-361.

This sequence in the N-terminal section; belongs to the DHBP synthase family. It in the C-terminal section; belongs to the GTP cyclohydrolase II family. It depends on Mg(2+) as a cofactor. Requires Mn(2+) as cofactor. Zn(2+) serves as cofactor.

The enzyme catalyses D-ribulose 5-phosphate = (2S)-2-hydroxy-3-oxobutyl phosphate + formate + H(+). It carries out the reaction GTP + 4 H2O = 2,5-diamino-6-hydroxy-4-(5-phosphoribosylamino)-pyrimidine + formate + 2 phosphate + 3 H(+). The protein operates within cofactor biosynthesis; riboflavin biosynthesis; 2-hydroxy-3-oxobutyl phosphate from D-ribulose 5-phosphate: step 1/1. It participates in cofactor biosynthesis; riboflavin biosynthesis; 5-amino-6-(D-ribitylamino)uracil from GTP: step 1/4. Its function is as follows. Catalyzes the conversion of D-ribulose 5-phosphate to formate and 3,4-dihydroxy-2-butanone 4-phosphate. Catalyzes the conversion of GTP to 2,5-diamino-6-ribosylamino-4(3H)-pyrimidinone 5'-phosphate (DARP), formate and pyrophosphate. This is Riboflavin biosynthesis protein RibBA from Chlorobium phaeovibrioides (strain DSM 265 / 1930) (Prosthecochloris vibrioformis (strain DSM 265)).